The chain runs to 177 residues: SAYSvFN domain-containing protein 1 (177 aa).

Topologically, residues 1-100 (MADFQEQLRQ…CLKYTLWTVY (100 aa)) are cytoplasmic. Residues 57 to 70 (SENSQDEAVTSSES) show a composition bias toward polar residues. The segment at 57 to 85 (SENSQDEAVTSSESELVPEEQPTRSTDHH) is disordered. The helical intramembrane region spans 101-121 (LLFWITLYVIAIKLSFGLVFL). At 122–177 (MFSALFGIYFNTRTEPKKRNEMSAYSVFNKNCESIDGTLKAEQFEREIRYGSGSVR) the chain is on the cytoplasmic side.

The protein belongs to the SAYSD1 family.

The protein localises to the endoplasmic reticulum membrane. Functionally, ufmylation 'reader' component of a translocation-associated quality control pathway, a mechanism that takes place when a ribosome has stalled during translation, and which is required to degrade clogged substrates. Specifically recognizes and binds ufmylated ribosomes when a ribosome has stalled, promoting the transport of stalled nascent chain to lysosomes for degradation. The sequence is that of SAYSvFN domain-containing protein 1 from Drosophila melanogaster (Fruit fly).